The sequence spans 96 residues: Co-chaperonin GroES (96 aa).

The protein belongs to the GroES chaperonin family. As to quaternary structure, heptamer of 7 subunits arranged in a ring. Interacts with the chaperonin GroEL.

The protein resides in the cytoplasm. Its function is as follows. Together with the chaperonin GroEL, plays an essential role in assisting protein folding. The GroEL-GroES system forms a nano-cage that allows encapsulation of the non-native substrate proteins and provides a physical environment optimized to promote and accelerate protein folding. GroES binds to the apical surface of the GroEL ring, thereby capping the opening of the GroEL channel. The sequence is that of Co-chaperonin GroES from Polynucleobacter necessarius subsp. necessarius (strain STIR1).